The following is a 156-amino-acid chain: Ribosomal RNA large subunit methyltransferase H (156 aa).

S-adenosyl-L-methionine contacts are provided by residues Leu-73, Gly-104, and 123-128; that span reads ISSMTL.

Belongs to the RNA methyltransferase RlmH family. In terms of assembly, homodimer.

The protein resides in the cytoplasm. The catalysed reaction is pseudouridine(1915) in 23S rRNA + S-adenosyl-L-methionine = N(3)-methylpseudouridine(1915) in 23S rRNA + S-adenosyl-L-homocysteine + H(+). Specifically methylates the pseudouridine at position 1915 (m3Psi1915) in 23S rRNA. This is Ribosomal RNA large subunit methyltransferase H from Burkholderia cenocepacia (strain ATCC BAA-245 / DSM 16553 / LMG 16656 / NCTC 13227 / J2315 / CF5610) (Burkholderia cepacia (strain J2315)).